Reading from the N-terminus, the 104-residue chain is Pyrimidine/purine nucleoside phosphorylase (104 aa).

The protein belongs to the nucleoside phosphorylase PpnP family.

The enzyme catalyses a purine D-ribonucleoside + phosphate = a purine nucleobase + alpha-D-ribose 1-phosphate. It carries out the reaction adenosine + phosphate = alpha-D-ribose 1-phosphate + adenine. The catalysed reaction is cytidine + phosphate = cytosine + alpha-D-ribose 1-phosphate. It catalyses the reaction guanosine + phosphate = alpha-D-ribose 1-phosphate + guanine. The enzyme catalyses inosine + phosphate = alpha-D-ribose 1-phosphate + hypoxanthine. It carries out the reaction thymidine + phosphate = 2-deoxy-alpha-D-ribose 1-phosphate + thymine. The catalysed reaction is uridine + phosphate = alpha-D-ribose 1-phosphate + uracil. It catalyses the reaction xanthosine + phosphate = alpha-D-ribose 1-phosphate + xanthine. Functionally, catalyzes the phosphorolysis of diverse nucleosides, yielding D-ribose 1-phosphate and the respective free bases. Can use uridine, adenosine, guanosine, cytidine, thymidine, inosine and xanthosine as substrates. Also catalyzes the reverse reactions. This is Pyrimidine/purine nucleoside phosphorylase from Herminiimonas arsenicoxydans.